A 148-amino-acid chain; its full sequence is MVEWTDAERTAILGLWGKLNIDEIGPQALSRCLIVYPWTQRYFATFGNLSSPAAIMGNPKVAAHGRTVMGGLERAIKNMDNVKNTYAALSVMHSEKLHVDPDNFRLLADCITVCAAMKFGQAGFNADVQEAWQKFLAVVVSALCRQYH.

The region spanning 3 to 148 (EWTDAERTAI…VVSALCRQYH (146 aa)) is the Globin domain. 2 residues coordinate heme b: histidine 64 and histidine 93.

Heterotetramer of two alpha chains and two beta chains. As to expression, red blood cells.

Involved in oxygen transport from gills to the various peripheral tissues. In Danio rerio (Zebrafish), this protein is Hemoglobin subunit beta-1 (ba1).